Here is an 808-residue protein sequence, read N- to C-terminus: Piwi-like protein 1 (808 aa).

In terms of domain architecture, PAZ spans 214–333 (RINRVLNENN…IPGELCYLCG (120 aa)). The interval 300-322 (SMVRPKEKTENEPEGPTETDQSL) is disordered. The Piwi domain occupies 492-790 (HMALVFIPDD…LAELVGKIHR (299 aa)).

Belongs to the argonaute family. Piwi subfamily. Expressed in dividing adult somatic stem cells (neoblasts).

The protein is Piwi-like protein 1 (wi-1) of Schmidtea mediterranea (Freshwater planarian flatworm).